The following is a 213-amino-acid chain: Large ribosomal subunit protein uL3 (213 aa).

Belongs to the universal ribosomal protein uL3 family. In terms of assembly, part of the 50S ribosomal subunit. Forms a cluster with proteins L14 and L19.

Functionally, one of the primary rRNA binding proteins, it binds directly near the 3'-end of the 23S rRNA, where it nucleates assembly of the 50S subunit. This is Large ribosomal subunit protein uL3 from Petrotoga mobilis (strain DSM 10674 / SJ95).